The following is a 79-amino-acid chain: Eumenine mastoparan-OD (79 aa).

The signal sequence occupies residues 1–24 (MKQTIVIVLLAAVAMMACLQMVAA). AXPX repeat units lie at residues 24 to 27 (AEPL), 30 to 33 (AAPA), 44 to 47 (ASPI), 52 to 55 (ANPE), and 58 to 61 (ASPE). Positions 25–62 (EPLPEAAPAPSPLAEAEALASPIAEALANPEALASPEA) are excised as a propeptide. A Leucine amide modification is found at Leu-76.

In terms of tissue distribution, expressed by the venom gland.

It is found in the secreted. The protein resides in the target cell membrane. Functionally, antimicrobial peptide with strong activity against the fungi C.albicans (MIC=6 uM) and B.cinerea (MIC=10 uM), and weaker activity against the Gram-negative bacterium E.coli (MIC=97 uM) and Gram-positive bacterium S.aureus (MIC=97 uM). Shows cytolytic activity against insect cell lines. Has potent hemolytic activity against ovine erythrocytes (80% at 50 uM), but has no hemolytic activity against human erythrocytes. In vivo, peptide injection in the vicinity of the head and thorax of lepidopteran larvae induces feeding disorder that lasts one or two days before recovering. In Orancistrocerus drewseni (Solitary wasp), this protein is Eumenine mastoparan-OD.